We begin with the raw amino-acid sequence, 152 residues long: S-Adenosylmethionine lyase (152 aa).

As to quaternary structure, homotetramer. Interacts with host METK; this interaction induces the polymerization of METK into filaments that are enzymatically inactive.

The enzyme catalyses S-adenosyl-L-methionine = L-homoserine lactone + S-methyl-5'-thioadenosine. Its function is as follows. Degrades the intracellular SAM pools of the host cell and inhibits the host S-adenosylmethionine synthase METK/MAT, thereby preventing methylation of the viral genome. Induces the polymerization of METK into filaments that are enzymatically inactive. Keeping the viral genome in an unmethylated state allows the phage to shift from a lytic infection under normal growth conditions to a transient lysogenic infection under glucose starvation, by blocking its own expression. Does not protect the virus immune against host restriction-modification systems. The polypeptide is S-Adenosylmethionine lyase (Escherichia coli (Bacteriophage T3)).